The chain runs to 606 residues: Gamma-aminobutyric acid receptor subunit beta (606 aa).

An N-terminal signal peptide occupies residues 1 to 44 (MSDSKMDKLARMAPLPRTPLLTIWLAINMALIAQETGHKRIHTV). Residues 45 to 268 (QAATGGGSML…CEIQFVRSMG (224 aa)) are Extracellular-facing. Asparagine 58 carries an N-linked (GlcNAc...) asparagine glycan. Cysteine 185 and cysteine 199 are disulfide-bonded. An N-linked (GlcNAc...) asparagine glycan is attached at asparagine 253. Helical transmembrane passes span 269–291 (YYLI…SFWL), 297–316 (PARV…LMSS), and 333–356 (YLGT…YMAK). Residues 357-568 (RIQMRKQRFM…LGITPSDIDK (212 aa)) are Cytoplasmic-facing. Disordered stretches follow at residues 376–451 (KQQL…VSNR) and 482–542 (HDPK…AAVP). The span at 381 to 395 (GANQQQANPNPNANV) shows a compositional bias: low complexity. Gly residues predominate over residues 396 to 425 (GGPGGVGVGPGGPGGPGGGVNVGVGMGMGP). The segment covering 430 to 443 (GHGHHAHSHGHPHA) has biased composition (basic residues). The span at 499 to 536 (GGRGGPQSHGPGPGQGGGPPGGGGGGGGGGGPPEGGGD) shows a compositional bias: gly residues. A helical membrane pass occupies residues 569–590 (YSRIVFPVCFVCFNLMYWIIYL).

It belongs to the ligand-gated ion channel (TC 1.A.9) family. Gamma-aminobutyric acid receptor (TC 1.A.9.5) subfamily.

It is found in the postsynaptic cell membrane. It localises to the cell membrane. Functionally, GABA, an inhibitory neurotransmitter, mediates neuronal inhibition by binding to the GABA receptor and opening an integral chloride channel. This is Gamma-aminobutyric acid receptor subunit beta (Rdl) from Drosophila simulans (Fruit fly).